The sequence spans 101 residues: Large ribosomal subunit protein uL24 (101 aa).

The protein belongs to the universal ribosomal protein uL24 family. As to quaternary structure, part of the 50S ribosomal subunit.

Functionally, one of two assembly initiator proteins, it binds directly to the 5'-end of the 23S rRNA, where it nucleates assembly of the 50S subunit. In terms of biological role, one of the proteins that surrounds the polypeptide exit tunnel on the outside of the subunit. In Paracoccus denitrificans (strain Pd 1222), this protein is Large ribosomal subunit protein uL24.